The sequence spans 260 residues: Putative protein phosphatase (260 aa).

The PPM-type phosphatase domain occupies 9–254 (FTGLSKKGPV…DNITAALVNL (246 aa)).

It carries out the reaction O-phospho-L-seryl-[protein] + H2O = L-seryl-[protein] + phosphate. It catalyses the reaction O-phospho-L-threonyl-[protein] + H2O = L-threonyl-[protein] + phosphate. This Mycoplasma genitalium (strain ATCC 33530 / DSM 19775 / NCTC 10195 / G37) (Mycoplasmoides genitalium) protein is Putative protein phosphatase.